Consider the following 209-residue polypeptide: Claudin-4 (209 aa).

At 1 to 9 the chain is on the cytoplasmic side; it reads MASMGLQVT. Residues 1–103 form an interaction with EPHA2 region; sequence MASMGLQVTG…GVLLSVVGGK (103 aa). Residues 10-30 form a helical membrane-spanning segment; the sequence is GIALAVLGWLAVMLCCALPMW. Over 31–81 the chain is Extracellular; sequence RVTAFIGSNIVTSQTIWEGLWMNCVVQSTGQMQCKVYDSLLALPQDLQAAR. Cysteines 54 and 64 form a disulfide. The chain crosses the membrane as a helical span at residues 82 to 102; sequence ALVIISIIVAALGVLLSVVGG. Residues 103-117 lie on the Cytoplasmic side of the membrane; sequence KCTNCLEDESAKAKT. A helical transmembrane segment spans residues 118 to 138; sequence MIVAGVVFLLAGLLVIVPVSW. Topologically, residues 139-160 are extracellular; the sequence is TAHNIIQDFYNPLVASGQKREM. The helical transmembrane segment at 161-181 threads the bilayer; the sequence is GASLYVGWAASGLLLLGGGLL. The Cytoplasmic portion of the chain corresponds to 182 to 209; the sequence is CCNCPPRTDKPYSAKYSAARSAAASNYV. Phosphotyrosine; by EPHA2 is present on tyrosine 208. The interval 208 to 209 is interactions with TJP1, TJP2 and TJP3; sequence YV.

Belongs to the claudin family. As to quaternary structure, interacts with EPHA2; phosphorylates CLDN4 and may regulate tight junctions. Directly interacts with TJP1/ZO-1, TJP2/ZO-2 and TJP3/ZO-3. Interacts with CLDN1. Interacts with CLDN8. Phosphorylated. Phosphorylation by EPHA2 is stimulated by EFNA1 and alters interaction with TJP1.

The protein localises to the cell junction. It localises to the tight junction. Its subcellular location is the cell membrane. Channel-forming tight junction protein that mediates paracellular chloride transport in the kidney. Plays a critical role in the paracellular reabsorption of filtered chloride in the kidney collecting ducts. Claudins play a major role in tight junction-specific obliteration of the intercellular space, through calcium-independent cell-adhesion activity. This Chlorocebus aethiops (Green monkey) protein is Claudin-4 (CLDN4).